The chain runs to 1715 residues: Sodium channel protein type 4 subunit alpha B (1715 aa).

Over 1 to 126 (MGTLLPPVGS…IFAIKILVHS (126 aa)) the chain is Cytoplasmic. One copy of the I repeat lies at 108–431 (LLSPFNSMRI…VVAMAYAEQN (324 aa)). The chain crosses the membrane as a helical span at residues 127-145 (LFSLFIMATILTNCVFMTL). Over 146–152 (SDPPAWS) the chain is Extracellular. The chain crosses the membrane as a helical span at residues 153 to 173 (KTVEYVFTFIYTFEATIKVVS). Over 174 to 187 (RGFCVGQFTFLKDP) the chain is Cytoplasmic. The chain crosses the membrane as a helical span at residues 188 to 205 (WNWLDFMVISMAYLTELV). Over 206–211 (DLGNVS) the chain is Extracellular. An N-linked (GlcNAc...) asparagine glycan is attached at Asn209. The chain crosses the membrane as a helical span at residues 212–228 (VLRTFRVLRALKTITVI). Over 229–247 (PGLKTIVGALIQSVKKLAD) the chain is Cytoplasmic. A helical membrane pass occupies residues 248–267 (AMVLTVFCLSVFALIGLQLF). Topologically, residues 268–368 (MGNLRQKCVL…PNYGYTSYDS (101 aa)) are extracellular. Residues Cys275 and Cys337 are joined by a disulfide bond. 3 N-linked (GlcNAc...) asparagine glycosylation sites follow: Asn284, Asn304, and Asn339. A disulfide bridge links Cys346 with Cys352. An intramembrane region (pore-forming) is located at residues 369 to 393 (FGWAFLALFRLMTQDFWENLFQLTL). Residues 394–400 (RAAGKTY) lie on the Extracellular side of the membrane. Residues 401–421 (MIFFVVVIFLGSFYLINLILA) form a helical membrane-spanning segment. Over 422–515 (VVAMAYAEQN…RCLSAIVMDP (94 aa)) the chain is Cytoplasmic. Residues 497 to 768 (CCSCWRHLKR…QIAVNRIKRA (272 aa)) form an II repeat. A helical membrane pass occupies residues 516–534 (FVDLGITICIILNTIFMAM). Residues 535–545 (EHYPMSADFEE) lie on the Extracellular side of the membrane. The helical transmembrane segment at 546 to 565 (LLSVGNLVFTGIFTCEMVLK) threads the bilayer. At 566 to 579 (ILAMDPYFYFQVGW) the chain is on the cytoplasmic side. A helical membrane pass occupies residues 580 to 599 (NIFDSIIVTMSLVELGLANV). The Extracellular segment spans residues 600-601 (QG). Residues 602-619 (LSVLRSFRLMRVFKLAKS) traverse the membrane as a helical segment. The Cytoplasmic portion of the chain corresponds to 620–635 (WPTLNMLIKIIGNSVG). Residues 636-654 (ALGNLTLVLAIIVFIFAVV) traverse the membrane as a helical segment. At 655 to 683 (GMQLFGKNYKDCVCRISEDCKLPRWHMND) the chain is on the extracellular side. The cysteines at positions 668 and 674 are disulfide-linked. The pore-forming intramembrane region spans 684-704 (FFHAFLIIFRVLCGEWIDTMW). Residues 705-715 (DCMEVSGQTMC) are Extracellular-facing. Cys706 and Cys715 form a disulfide bridge. A helical transmembrane segment spans residues 716–734 (LIVYMMVLVIGNLVVLNLF). Topologically, residues 735–915 (LALLLSSFSG…ACFIIVENNY (181 aa)) are cytoplasmic. The interval 824 to 865 (EAESDSEDSDDDDVDEDKHSRCDESSFCSTVQDPEVKENEAD) is disordered. The span at 825-838 (AESDSEDSDDDDVD) shows a compositional bias: acidic residues. One copy of the III repeat lies at 896–1211 (KGKVWCNIRR…KKYYNAMKKL (316 aa)). A helical membrane pass occupies residues 916 to 933 (FESFIVFMILLSSGALAF). The Extracellular portion of the chain corresponds to 934–946 (EDIYLEKHQLIKT). Residues 947 to 965 (ILEYADKVFTYVFVVEMVL) traverse the membrane as a helical segment. Over 966-979 (KWFAYGFKSYFSNA) the chain is Cytoplasmic. The helical transmembrane segment at 980–998 (WCWLDFLIVDVSLVSLTAN) threads the bilayer. Topologically, residues 999-1006 (ILGYSELG) are extracellular. The helical transmembrane segment at 1007–1025 (AIKSLRTLRALRPLRALSR) threads the bilayer. Residues 1026 to 1042 (FEGMRVVVNALVGAVPS) are Cytoplasmic-facing. The chain crosses the membrane as a helical span at residues 1043–1062 (IFNVLLVCLIFWLIFSIMGV). The Extracellular segment spans residues 1063-1115 (NLFAGKFSYCFNETSQEQFDKKIVNNKTECIALIEANFTEVRWKNLKVNYDNV). Residues Cys1072 and Cys1092 are joined by a disulfide bond. Asn1074 and Asn1088 each carry an N-linked (GlcNAc...) asparagine glycan. Residues 1116 to 1137 (GIGYLSLLQVATFKGWMEIMYA) constitute an intramembrane region (pore-forming). The Extracellular portion of the chain corresponds to 1138–1154 (AVDSRDVESQPIYEVNI). Residues 1155 to 1176 (YMYLYFVIFIIFGSFFTLNLFI) traverse the membrane as a helical segment. At 1177–1239 (GVIIDNFNQQ…LVFDLVTKQI (63 aa)) the chain is on the cytoplasmic side. The tract at residues 1195-1197 (IFM) is important for rapid channel inactivation. The IV repeat unit spans residues 1220-1517 (VPRPENALQG…WEKFDPDATQ (298 aa)). A helical transmembrane segment spans residues 1240–1257 (FDVFIMVLICLNMVTMMV). Over 1258–1268 (ETDEQTKEKED) the chain is Extracellular. Residues 1269-1287 (ILYWINVIFIVIFTTECIL) traverse the membrane as a helical segment. Residues 1288–1299 (KTIALRRHYFSI) are Cytoplasmic-facing. Residues 1300–1317 (GWNVFDFVVVILSILGLL) traverse the membrane as a helical segment. Over 1318–1330 (LADIIEKYFVSPT) the chain is Extracellular. A helical membrane pass occupies residues 1331–1347 (LFRVIRLARIGRVLRLI). At 1348–1366 (RGAKGIRTLLFALMMSLPA) the chain is on the cytoplasmic side. The helical transmembrane segment at 1367-1384 (LFNIGLLLFLIMFIFSIF) threads the bilayer. The Extracellular portion of the chain corresponds to 1385 to 1406 (GMSNFAYVKKEAMIDDMFNFET). Positions 1407–1429 (FGNSMICLFMITTSAGWDGLLSP) form an intramembrane region, pore-forming. The Extracellular portion of the chain corresponds to 1430-1458 (IMNKPPDCDPDLENPGTTVRGNCGSPAIG). Cysteines 1437 and 1452 form a disulfide. A helical transmembrane segment spans residues 1459 to 1481 (IVFFSTYIIMSFLVVVNMYIAII). At 1482–1715 (LENFNVATEE…LGTSERESLV (234 aa)) the chain is on the cytoplasmic side. Positions 1611-1640 (EEVAARVIQRAYRKYLLQRTVRLASFTYRE) constitute an IQ domain.

It belongs to the sodium channel (TC 1.A.1.10) family. Nav1.4/SCN4A subfamily. In terms of assembly, voltage-gated sodium (Nav) channels consist of an ion-conducting alpha subunit which is functional on its own associated with regulatory beta subunits.

The protein resides in the cell membrane. It catalyses the reaction Na(+)(in) = Na(+)(out). Pore-forming subunit of a voltage-gated sodium (Nav) channel that directly mediates the depolarizing phase of action potentials in excitable membranes. Navs, also called VGSCs (voltage-gated sodium channels) or VDSCs (voltage-dependent sodium channels), operate by switching between closed and open conformations depending on the voltage difference across the membrane. In the open conformation they allow Na(+) ions to selectively pass through the pore, along their electrochemical gradient. The influx of Na+ ions provokes membrane depolarization, initiating the propagation of electrical signals throughout cells and tissues. The chain is Sodium channel protein type 4 subunit alpha B (scn4ab) from Tetraodon nigroviridis (Spotted green pufferfish).